The following is a 344-amino-acid chain: Dihydroorotase (344 aa).

Positions 14 and 16 each coordinate Zn(2+). Residues 16–18 (HLR) and asparagine 42 each bind substrate. Lysine 99, histidine 136, and histidine 174 together coordinate Zn(2+). The residue at position 99 (lysine 99) is an N6-carboxylysine. Histidine 136 provides a ligand contact to substrate. Position 219 (leucine 219) interacts with substrate. Aspartate 247 contacts Zn(2+). Aspartate 247 is an active-site residue. Histidine 251 and alanine 263 together coordinate substrate.

Belongs to the metallo-dependent hydrolases superfamily. DHOase family. Class II DHOase subfamily. In terms of assembly, homodimer. The cofactor is Zn(2+).

The catalysed reaction is (S)-dihydroorotate + H2O = N-carbamoyl-L-aspartate + H(+). It participates in pyrimidine metabolism; UMP biosynthesis via de novo pathway; (S)-dihydroorotate from bicarbonate: step 3/3. Catalyzes the reversible cyclization of carbamoyl aspartate to dihydroorotate. This chain is Dihydroorotase, found in Teredinibacter turnerae (strain ATCC 39867 / T7901).